Here is a 24-residue protein sequence, read N- to C-terminus: Cytochrome c3-2 (24 aa).

The interval 1–24 (GNAPAADMVLKAPGDAKMTKTAVP) is disordered.

In terms of processing, binds 4 heme groups per subunit.

The protein resides in the periplasm. Participates in sulfate respiration coupled with phosphorylation by transferring electrons from the enzyme dehydrogenase to ferredoxin. This is Cytochrome c3-2 from Nitratidesulfovibrio vulgaris (Desulfovibrio vulgaris).